Reading from the N-terminus, the 82-residue chain is Lectin-D2 (82 aa).

2 Chitin-binding type-1 domains span residues 1 to 42 (APEC…QCDY) and 43 to 82 (WRCGRDFGGRLCEEDMCCSKYGWCGYSDDHCEDGCQSQCD). 4 disulfides stabilise this stretch: cysteine 4–cysteine 19, cysteine 13–cysteine 25, cysteine 18–cysteine 32, and cysteine 36–cysteine 40. Positions 20, 22, 24, and 31 each coordinate a carbohydrate. Tryptophan 43 provides a ligand contact to a carbohydrate. 4 cysteine pairs are disulfide-bonded: cysteine 45–cysteine 60, cysteine 54–cysteine 66, cysteine 59–cysteine 73, and cysteine 77–cysteine 81. Residues serine 61, tyrosine 63, tryptophan 65, and histidine 72 each coordinate a carbohydrate.

As to quaternary structure, monomer.

Its function is as follows. N-acetyl-D-glucosamine binding lectin. Shows no hemagglutinating activity towards rabbit erythrocytes and weak activity towards trypsin-treated erythrocytes. Has mitogenic activity towards human peripheral blood lymphocytes (HPBL). In Phytolacca americana (American pokeweed), this protein is Lectin-D2.